A 468-amino-acid polypeptide reads, in one-letter code: UDP-N-acetylmuramate--L-alanine ligase (468 aa).

114–120 (GTHGKTT) contacts ATP.

Belongs to the MurCDEF family.

It is found in the cytoplasm. The enzyme catalyses UDP-N-acetyl-alpha-D-muramate + L-alanine + ATP = UDP-N-acetyl-alpha-D-muramoyl-L-alanine + ADP + phosphate + H(+). It functions in the pathway cell wall biogenesis; peptidoglycan biosynthesis. Cell wall formation. The protein is UDP-N-acetylmuramate--L-alanine ligase of Methylobacterium radiotolerans (strain ATCC 27329 / DSM 1819 / JCM 2831 / NBRC 15690 / NCIMB 10815 / 0-1).